The sequence spans 293 residues: Ribosomal protein L11 methyltransferase (293 aa).

The S-adenosyl-L-methionine site is built by threonine 145, glycine 166, aspartate 188, and asparagine 230.

It belongs to the methyltransferase superfamily. PrmA family.

It is found in the cytoplasm. It carries out the reaction L-lysyl-[protein] + 3 S-adenosyl-L-methionine = N(6),N(6),N(6)-trimethyl-L-lysyl-[protein] + 3 S-adenosyl-L-homocysteine + 3 H(+). Methylates ribosomal protein L11. This is Ribosomal protein L11 methyltransferase from Escherichia coli O7:K1 (strain IAI39 / ExPEC).